The chain runs to 517 residues: Endoglycoceramidase (517 aa).

Residues 1–17 (MISVALIILFLAKVISG) form the signal peptide. Asn99 carries an N-linked (GlcNAc...) asparagine glycan. Residue Glu230 is the Proton donor of the active site. Asn298, Asn380, and Asn393 each carry an N-linked (GlcNAc...) asparagine glycan.

It belongs to the glycosyl hydrolase 5 (cellulase A) family. Expressed uniformly in digestive cells, tentacles and peduncle regions suggesting expression in the endoderm throughout the whole body (at protein level).

It localises to the secreted. It catalyses the reaction an oligoglycosyl-(1-&gt;4)-beta-D-glucosyl-(1&lt;-&gt;1)-ceramide + H2O = an oligoglycosyl-(1-&gt;4)-D-glucose + an N-acyl-sphingoid base. Cu(2+), zinc, manganese, calcium, magnesium and EDTA have no significant effects on enzyme activity. Enzyme requires presence of detergents such as Triton X-100 and Lubrol PX for the hydrolysis of glycosphingolipids. Taurodeoxycholate strongly inhibits the enzyme activity. Functionally, hydrolysis of the glycosidic linkage between oligosaccharides and ceramides of glycosphingolipids, optimal substrates appear to be the glycosphingolipids with a gangliotetraose structure. The protein is Endoglycoceramidase of Hydra vulgaris (Hydra).